Consider the following 1040-residue polypeptide: Vacuolar membrane protease (1040 aa).

The Cytoplasmic segment spans residues 1 to 9; sequence MINPISFRP. The chain crosses the membrane as a helical span at residues 10 to 30; sequence GPVTFWTTLIYLALLIPIVII. Residues 31-405 are Vacuolar-facing; sequence NEEPPAAPKT…SFVLFGLRGM (375 aa). N-linked (GlcNAc...) asparagine glycans are attached at residues N48, N117, N120, and N129. Zn(2+)-binding residues include H186 and D198. The active-site Proton acceptor is E232. Positions 233, 258, and 331 each coordinate Zn(2+). Residues 406–426 form a helical membrane-spanning segment; sequence FAWSLTLLIATPLILVGITWL. Topologically, residues 427 to 436 are cytoplasmic; it reads LRNLDKDYFF. The helical transmembrane segment at 437–456 threads the bilayer; it reads TSTVKTKEHPEYEAVPIGGW. Over 457 to 462 the chain is Vacuolar; that stretch reads KGFFRW. Residues 463–483 traverse the membrane as a helical segment; sequence AMMVSIFYFSFWMIMRGANFV. The Cytoplasmic segment spans residues 484-490; sequence RPSALHR. A helical membrane pass occupies residues 491-511; the sequence is GYANLWLFVFGWIVLVAVTAL. Topologically, residues 512-521 are vacuolar; sequence EDRRRIAAGY. A helical transmembrane segment spans residues 522–542; sequence IFVFLESAIFLSCLISFVELL. Topologically, residues 543 to 715 are cytoplasmic; it reads ALPRKSAYAL…YEHEQDWSGH (173 aa). The disordered stretch occupies residues 563-680; it reads HSGYQGYRDS…NGTNDRGRTT (118 aa). 2 stretches are compositionally biased toward low complexity: residues 577 to 594 and 616 to 626; these read SSGA…PSSP and APSVAAHSSQP. The span at 636-647 shows a compositional bias: polar residues; sequence GRSTSAPIPSTT. Residues 650 to 661 show a composition bias toward acidic residues; the sequence is DEDESEDDDDEA. The chain crosses the membrane as a helical span at residues 716 to 736; it reads LPSWAWFFQFLLLGPFMIILA. The Vacuolar segment spans residues 737–758; sequence AQTGLMLTDAVYQTGSDGSKLF. A helical transmembrane segment spans residues 759–779; it reads TPYLMIFFFTLLLILPLTPFI. Topologically, residues 780–785 are cytoplasmic; that stretch reads HRVTHH. The helical transmembrane segment at 786 to 806 threads the bilayer; sequence IPVFLLVVFIVTLTYNLIAFP. Over 807-1040 the chain is Vacuolar; sequence FSANNRYKAF…VEGRKAFKIV (234 aa). N-linked (GlcNAc...) asparagine glycosylation is present at N900.

Belongs to the peptidase M28 family. The cofactor is Zn(2+).

It is found in the vacuole membrane. May be involved in vacuolar sorting and osmoregulation. The polypeptide is Vacuolar membrane protease (Sordaria macrospora (strain ATCC MYA-333 / DSM 997 / K(L3346) / K-hell)).